We begin with the raw amino-acid sequence, 156 residues long: ATP synthase subunit b (156 aa).

Residues 13 to 33 (AFIIFVWCCMKFVWPPLMAAI) traverse the membrane as a helical segment.

This sequence belongs to the ATPase B chain family. F-type ATPases have 2 components, F(1) - the catalytic core - and F(0) - the membrane proton channel. F(1) has five subunits: alpha(3), beta(3), gamma(1), delta(1), epsilon(1). F(0) has three main subunits: a(1), b(2) and c(10-14). The alpha and beta chains form an alternating ring which encloses part of the gamma chain. F(1) is attached to F(0) by a central stalk formed by the gamma and epsilon chains, while a peripheral stalk is formed by the delta and b chains.

Its subcellular location is the cell inner membrane. Functionally, f(1)F(0) ATP synthase produces ATP from ADP in the presence of a proton or sodium gradient. F-type ATPases consist of two structural domains, F(1) containing the extramembraneous catalytic core and F(0) containing the membrane proton channel, linked together by a central stalk and a peripheral stalk. During catalysis, ATP synthesis in the catalytic domain of F(1) is coupled via a rotary mechanism of the central stalk subunits to proton translocation. In terms of biological role, component of the F(0) channel, it forms part of the peripheral stalk, linking F(1) to F(0). This chain is ATP synthase subunit b, found in Aeromonas salmonicida (strain A449).